The primary structure comprises 239 residues: Small ribosomal subunit protein uS3c (239 aa).

Positions 43 to 139 (IKNYIQKNRK…RLNIGIEKVK (97 aa)) constitute a KH type-2 domain.

It belongs to the universal ribosomal protein uS3 family. In terms of assembly, part of the 30S ribosomal subunit.

The protein localises to the plastid. It localises to the chloroplast. This Oryza nivara (Indian wild rice) protein is Small ribosomal subunit protein uS3c (rps3).